Here is a 108-residue protein sequence, read N- to C-terminus: UPF0060 membrane protein amb3269 (108 aa).

The next 4 membrane-spanning stretches (helical) occupy residues 4–24 (IPTY…FWAW), 31–51 (PLWL…LTRI), 59–79 (AYAA…WAVE), and 85–105 (RWDT…IFGP).

This sequence belongs to the UPF0060 family.

Its subcellular location is the cell inner membrane. The polypeptide is UPF0060 membrane protein amb3269 (Paramagnetospirillum magneticum (strain ATCC 700264 / AMB-1) (Magnetospirillum magneticum)).